Here is a 561-residue protein sequence, read N- to C-terminus: Phosphatidylinositol 4-kinase gamma 1 (561 aa).

Residues 121–416 (GAQPLLLPSG…SVFGKTSEDS (296 aa)) form the PI3K/PI4K catalytic domain. The interval 127-133 (LPSGMGG) is G-loop. Residues 128–134 (PSGMGGA), Lys149, and 233–236 (QRFV) each bind ATP. The interval 266–274 (LNLDRHAGN) is catalytic loop. The segment at 296–322 (PIDHGLCLPECLDDPYFEWLNWPQALV) is activation loop. Position 298 (Asp298) interacts with ATP. The tract at residues 456–520 (PPLVPRGPRA…PISPNHDESK (65 aa)) is disordered. Over residues 467–484 (TIPNDVTASMSSSQNQRI) the composition is skewed to polar residues.

The protein belongs to the PI3/PI4-kinase family. Type II PI4K subfamily.

It carries out the reaction a 1,2-diacyl-sn-glycero-3-phospho-(1D-myo-inositol) + ATP = a 1,2-diacyl-sn-glycero-3-phospho-(1D-myo-inositol 4-phosphate) + ADP + H(+). In terms of biological role, the phosphorylation of phosphatidylinositol (PI) to PI4P is the first committed step in the generation of phosphatidylinositol 4,5-bisphosphate (PIP2), a precursor of the second messenger inositol 1,4,5-trisphosphate (InsP3). This chain is Phosphatidylinositol 4-kinase gamma 1 (PI4KG1), found in Arabidopsis thaliana (Mouse-ear cress).